The following is a 188-amino-acid chain: ATP synthase subunit b 1 (188 aa).

Residues 7–27 (LSVLALAMLAANPAFAAGGGI) form a helical membrane-spanning segment.

Belongs to the ATPase B chain family. As to quaternary structure, F-type ATPases have 2 components, F(1) - the catalytic core - and F(0) - the membrane proton channel. F(1) has five subunits: alpha(3), beta(3), gamma(1), delta(1), epsilon(1). F(0) has three main subunits: a(1), b(2) and c(10-14). The alpha and beta chains form an alternating ring which encloses part of the gamma chain. F(1) is attached to F(0) by a central stalk formed by the gamma and epsilon chains, while a peripheral stalk is formed by the delta and b chains.

The protein localises to the cell inner membrane. F(1)F(0) ATP synthase produces ATP from ADP in the presence of a proton or sodium gradient. F-type ATPases consist of two structural domains, F(1) containing the extramembraneous catalytic core and F(0) containing the membrane proton channel, linked together by a central stalk and a peripheral stalk. During catalysis, ATP synthesis in the catalytic domain of F(1) is coupled via a rotary mechanism of the central stalk subunits to proton translocation. Its function is as follows. Component of the F(0) channel, it forms part of the peripheral stalk, linking F(1) to F(0). The polypeptide is ATP synthase subunit b 1 (Roseobacter denitrificans (strain ATCC 33942 / OCh 114) (Erythrobacter sp. (strain OCh 114))).